A 117-amino-acid polypeptide reads, in one-letter code: G antigen 4 (117 aa).

The segment at 1-117 is disordered; the sequence is MSWRGRSTYY…PEEGEKQSQC (117 aa). Acidic residues-rich tracts occupy residues 32-45 and 87-96; these read FSDEVEPATPEEGE and ECEDGPDGQE. The span at 103 to 117 shows a compositional bias: basic and acidic residues; the sequence is EEVKTPEEGEKQSQC.

The protein belongs to the GAGE family. As to expression, expressed in a variety of tumor tissues but not in normal tissues, except testis.

Functionally, antigen, recognized on melanoma by autologous cytolytic T-lymphocytes. This is G antigen 4 from Homo sapiens (Human).